Reading from the N-terminus, the 211-residue chain is ATP phosphoribosyltransferase (211 aa).

Belongs to the ATP phosphoribosyltransferase family. Short subfamily. As to quaternary structure, heteromultimer composed of HisG and HisZ subunits.

The protein localises to the cytoplasm. The enzyme catalyses 1-(5-phospho-beta-D-ribosyl)-ATP + diphosphate = 5-phospho-alpha-D-ribose 1-diphosphate + ATP. It functions in the pathway amino-acid biosynthesis; L-histidine biosynthesis; L-histidine from 5-phospho-alpha-D-ribose 1-diphosphate: step 1/9. Its function is as follows. Catalyzes the condensation of ATP and 5-phosphoribose 1-diphosphate to form N'-(5'-phosphoribosyl)-ATP (PR-ATP). Has a crucial role in the pathway because the rate of histidine biosynthesis seems to be controlled primarily by regulation of HisG enzymatic activity. This chain is ATP phosphoribosyltransferase, found in Hahella chejuensis (strain KCTC 2396).